Here is a 772-residue protein sequence, read N- to C-terminus: Carnitine O-palmitoyltransferase 1, muscle isoform (772 aa).

Residues 1 to 47 (MAEAHQAVAFQFTVTPDGVDFRLSREALRHIYLSGINSWKKRLIRIK) lie on the Cytoplasmic side of the membrane. A helical transmembrane segment spans residues 48–73 (NGILRGVYPGSPTSWLVVVMATVGSN). Over 74 to 102 (YCKVDISMGLVHCIQRCLPTRYGSYGTPQ) the chain is Mitochondrial intermembrane. A helical transmembrane segment spans residues 103 to 122 (TETLLSMVIFSTGVWATGIF). Residues 123-772 (LFRQTLKLLL…DLFKISKTDS (650 aa)) are Cytoplasmic-facing. Residue histidine 473 is the Proton acceptor of the active site. Residue 555 to 567 (GKGLIKKCRTSPD) participates in CoA binding. Residues tyrosine 589 and threonine 602 each contribute to the (R)-carnitine site.

The protein belongs to the carnitine/choline acetyltransferase family. As to expression, high expression in heart, skeletal muscle and brown adipose tissue. Also expressed in white adipose tissue, but not in liver.

It localises to the mitochondrion outer membrane. It catalyses the reaction (R)-carnitine + hexadecanoyl-CoA = O-hexadecanoyl-(R)-carnitine + CoA. It functions in the pathway lipid metabolism; fatty acid beta-oxidation. In terms of biological role, catalyzes the transfer of the acyl group of long-chain fatty acid-CoA conjugates onto carnitine, an essential step for the mitochondrial uptake of long-chain fatty acids and their subsequent beta-oxidation in the mitochondrion. In Rattus norvegicus (Rat), this protein is Carnitine O-palmitoyltransferase 1, muscle isoform (Cpt1b).